The following is a 429-amino-acid chain: Histidine--tRNA ligase (429 aa).

Belongs to the class-II aminoacyl-tRNA synthetase family. In terms of assembly, homodimer.

It is found in the cytoplasm. It catalyses the reaction tRNA(His) + L-histidine + ATP = L-histidyl-tRNA(His) + AMP + diphosphate + H(+). This Pseudomonas syringae pv. syringae (strain B728a) protein is Histidine--tRNA ligase.